A 1027-amino-acid polypeptide reads, in one-letter code: D-2-hydroxyglutarate dehydrogenase (1027 aa).

The region spanning 48-284 (YQQLPQAILF…CEAKLNLLLI (237 aa)) is the FAD-binding PCMH-type domain. R405 and H503 together coordinate (R)-2-hydroxyglutarate. A 4Fe-4S ferredoxin-type domain is found at 665–696 (HEVKAAMDTCLACKACASQCPIKIDVPSFRAK). C674, C677, C680, and C684 together coordinate [4Fe-4S] cluster.

The protein in the N-terminal section; belongs to the FAD-binding oxidoreductase/transferase type 4 family. As to quaternary structure, homotetramer. The cofactor is [4Fe-4S] cluster. It depends on FAD as a cofactor.

It catalyses the reaction (R)-2-hydroxyglutarate + A = 2-oxoglutarate + AH2. In terms of biological role, catalyzes the oxidation of D-2-hydroxyglutarate (D-2-HGA) to 2-oxoglutarate. Provides the way to recycle D-2-HGA produced during L-serine synthesis by SerA, by converting it back to 2-oxoglutarate. The physiological molecule that functions as the primary electron acceptor during D-2-HGA oxidation is unknown. The protein is D-2-hydroxyglutarate dehydrogenase of Haemophilus influenzae (strain ATCC 51907 / DSM 11121 / KW20 / Rd).